Here is a 340-residue protein sequence, read N- to C-terminus: Probable allantoicase (340 aa).

The protein belongs to the allantoicase family.

The enzyme catalyses allantoate + H2O = (S)-ureidoglycolate + urea. Its pathway is nitrogen metabolism; (S)-allantoin degradation; (S)-ureidoglycolate from allantoate (aminidohydrolase route): step 1/1. The sequence is that of Probable allantoicase from Rhizobium meliloti (strain 1021) (Ensifer meliloti).